The sequence spans 195 residues: MFSNVGWGEVLVLLIVALFLIGPERLPGLIKEVRAMLLAVRNAISQAKEQIDGELGEDFREFSKPLQELNSVRQMGAKGFITKTLLDGDDSFLTSFNETKQDVKDTVDTVRKPNLRESLKADKTKKSAQPQPSLASGSADNGGIAVTQQSNAGESRSSHDSPVADAAEQLTGDVGSASEPKEKPSAPGYGWEDVT.

Residues 2 to 22 (FSNVGWGEVLVLLIVALFLIG) form a helical membrane-spanning segment. The span at 103 to 125 (VKDTVDTVRKPNLRESLKADKTK) shows a compositional bias: basic and acidic residues. The disordered stretch occupies residues 103 to 195 (VKDTVDTVRK…APGYGWEDVT (93 aa)). Composition is skewed to polar residues over residues 127 to 139 (SAQP…SGSA) and 146 to 155 (VTQQSNAGES).

Belongs to the TatB family. As to quaternary structure, the Tat system comprises two distinct complexes: a TatABC complex, containing multiple copies of TatA, TatB and TatC subunits, and a separate TatA complex, containing only TatA subunits. Substrates initially bind to the TatABC complex, which probably triggers association of the separate TatA complex to form the active translocon.

Its subcellular location is the cell membrane. Part of the twin-arginine translocation (Tat) system that transports large folded proteins containing a characteristic twin-arginine motif in their signal peptide across membranes. Together with TatC, TatB is part of a receptor directly interacting with Tat signal peptides. TatB may form an oligomeric binding site that transiently accommodates folded Tat precursor proteins before their translocation. This chain is Sec-independent protein translocase protein TatB, found in Corynebacterium jeikeium (strain K411).